The following is a 469-amino-acid chain: 3-isopropylmalate dehydratase large subunit (469 aa).

The [4Fe-4S] cluster site is built by cysteine 347, cysteine 410, and cysteine 413.

This sequence belongs to the aconitase/IPM isomerase family. LeuC type 1 subfamily. In terms of assembly, heterodimer of LeuC and LeuD. [4Fe-4S] cluster is required as a cofactor.

It catalyses the reaction (2R,3S)-3-isopropylmalate = (2S)-2-isopropylmalate. It participates in amino-acid biosynthesis; L-leucine biosynthesis; L-leucine from 3-methyl-2-oxobutanoate: step 2/4. Functionally, catalyzes the isomerization between 2-isopropylmalate and 3-isopropylmalate, via the formation of 2-isopropylmaleate. This is 3-isopropylmalate dehydratase large subunit from Burkholderia lata (strain ATCC 17760 / DSM 23089 / LMG 22485 / NCIMB 9086 / R18194 / 383).